Here is a 430-residue protein sequence, read N- to C-terminus: Enolase (430 aa).

Glutamine 167 provides a ligand contact to (2R)-2-phosphoglycerate. Residue glutamate 209 is the Proton donor of the active site. Aspartate 245, glutamate 286, and aspartate 313 together coordinate Mg(2+). Positions 338, 367, 368, and 389 each coordinate (2R)-2-phosphoglycerate. Lysine 338 acts as the Proton acceptor in catalysis.

It belongs to the enolase family. Requires Mg(2+) as cofactor.

It is found in the cytoplasm. It localises to the secreted. Its subcellular location is the cell surface. The catalysed reaction is (2R)-2-phosphoglycerate = phosphoenolpyruvate + H2O. It functions in the pathway carbohydrate degradation; glycolysis; pyruvate from D-glyceraldehyde 3-phosphate: step 4/5. Catalyzes the reversible conversion of 2-phosphoglycerate (2-PG) into phosphoenolpyruvate (PEP). It is essential for the degradation of carbohydrates via glycolysis. In Synechococcus sp. (strain CC9311), this protein is Enolase.